A 269-amino-acid polypeptide reads, in one-letter code: Pertussis toxin subunit 1 homolog (269 aa).

The first 34 residues, 1 to 34, serve as a signal peptide directing secretion; that stretch reads MRCTRAIRQTARTGWLTWLAILAVTAPVTSPAWA.

Belongs to the bacterial exotoxin subunit A family.

This is Pertussis toxin subunit 1 homolog (ptxA) from Bordetella bronchiseptica (strain ATCC BAA-588 / NCTC 13252 / RB50) (Alcaligenes bronchisepticus).